Consider the following 488-residue polypeptide: Inosine-5'-monophosphate dehydrogenase (488 aa).

2 CBS domains span residues 95–153 (VITN…SIKI) and 157–213 (MTKE…PHAA). NAD(+)-binding positions include D250 and 300–302 (GIG). Residues G302 and G304 each contribute to the K(+) site. Residue S305 coordinates IMP. C307 contacts K(+). C307 acts as the Thioimidate intermediate in catalysis. IMP contacts are provided by residues 340 to 342 (DGG), 363 to 364 (GS), and 387 to 391 (YRGMG). The active-site Proton acceptor is the R403. Residue E417 coordinates IMP. A disordered region spans residues 467-488 (AGLAESHPHNVQITKESPNYSF). The K(+) site is built by E471, S472, and H473. Positions 475–488 (HNVQITKESPNYSF) are enriched in polar residues.

Belongs to the IMPDH/GMPR family. Homotetramer. The cofactor is K(+).

The catalysed reaction is IMP + NAD(+) + H2O = XMP + NADH + H(+). The protein operates within purine metabolism; XMP biosynthesis via de novo pathway; XMP from IMP: step 1/1. Its activity is regulated as follows. Mycophenolic acid (MPA) is a non-competitive inhibitor that prevents formation of the closed enzyme conformation by binding to the same site as the amobile flap. In contrast, mizoribine monophosphate (MZP) is a competitive inhibitor that induces the closed conformation. MPA is a potent inhibitor of mammalian IMPDHs but a poor inhibitor of the bacterial enzymes. MZP is a more potent inhibitor of bacterial IMPDH. In terms of biological role, catalyzes the conversion of inosine 5'-phosphate (IMP) to xanthosine 5'-phosphate (XMP), the first committed and rate-limiting step in the de novo synthesis of guanine nucleotides, and therefore plays an important role in the regulation of cell growth. The sequence is that of Inosine-5'-monophosphate dehydrogenase from Staphylococcus haemolyticus (strain JCSC1435).